A 1013-amino-acid chain; its full sequence is DTSEFDPLANKEYTEEQKQKLEQEQKELLSQTTTPELEADDGFIVTSASSAQSTPSISALSGNISPDSQTSDPITKAVRETIIQPQKDNLIEQILKDLAALTDRDLAEQKRKEIEEEKEKDKTLSTFFGNPANREFIDKALENPELKKKLESIEIAGYKNVHNTFSTASGYPGGFKPVQWENQVSASDLRATVVKNDAGDELCTLNETTVKTKPFTVAKQDGTQVQISSYREIDFPIKLDKADGSMHLSMVALKADGTKPSKDKAIYFTAHYEEGPNGKPQLKEISSPKPLKFAGTGDDAIAYIEHGGEIYTLAVTRGKYKEMMKEVELNQGQSVDLSQAEDIIIGQGQSKEQPLITPQQTASSSVESPQYKQQVPPITPTNQPLQPETSQMPQSQQVNPNLLNAATALSGSMQDLLNYVNAGLTKEIDSNKQIDLIKEAATAILHNAKSDIAEKQTNIIALAENTVNNQNLTPDAKVAGVNAVLETIKNDQNTPDLEKSKMLEATVAITLNSENLEPKQKEQMLEKTVDVGLSLKDDASRAAAIDGITDAVIKSNLSTEDKGTMLIAVGDKVNVSELSNAEKQKLLGSVLKKGVEAQVLSPAQQQLMQQNLDKITAEQTKKDTIKKVNDILFDPLSSTELKTTNIQAITSNVLDGPATAEVKGEIIQEITNTVAGSSLEAQDKAEIVKGVGETIATHSDTSLSLPNKALIMASAEKGIVESKTNLPDRELMTKGLVDGIYEGKGGPEITKAVSSGIDNSNINDSEKEALKKAKDAASEATLDIETQNLTEGLKGQNIEEHKPRDDIYNKAQEVINAVNPVIEALEKPKAPVVSAEERIVQETSSILNNISKLAVEKVNNFRAMLSSNGNFKTLEKKKEESIKKVDELVKAFGTKSSTEEQQSFIKANLIDDKTLSKEVRLQTIDKLLQEQTQKQAEAIENPSVKTEDVRVVSGKSELKPISKDTPDIEKAKMVVGRDRVNIKENIKIMGALMNARDSIQSENVNKSTPIKRE.

Disordered regions lie at residues 1 to 73 and 348 to 396; these read DTSE…TSDP and GQSK…PQSQ. The span at 12–27 shows a compositional bias: basic and acidic residues; it reads EYTEEQKQKLEQEQKE. Low complexity predominate over residues 47 to 61; that stretch reads SASSAQSTPSISALS. 3 stretches are compositionally biased toward polar residues: residues 62–73, 348–373, and 380–396; these read GNISPDSQTSDP, GQSKEQPLITPQQTASSSVESPQYKQ, and PTNQPLQPETSQMPQSQ.

It is found in the cytoplasm. The polypeptide is Antigenic heat-stable 120 kDa protein (sca4) (Rickettsia rhipicephali).